The primary structure comprises 160 residues: M-phase phosphoprotein 6 (160 aa).

Residues Lys37 and Lys86 each participate in a glycyl lysine isopeptide (Lys-Gly) (interchain with G-Cter in SUMO2) cross-link. Ser110 carries the post-translational modification Phosphoserine. Positions 116 to 133 (RRYETLVGTIGKKFARKR) match the Nuclear localization signal motif. Lys127 is covalently cross-linked (Glycyl lysine isopeptide (Lys-Gly) (interchain with G-Cter in SUMO2)). Phosphothreonine is present on Thr147. Glycyl lysine isopeptide (Lys-Gly) (interchain with G-Cter in SUMO2) cross-links involve residues Lys150 and Lys153.

The protein belongs to the MPP6 family. As to quaternary structure, associates with the RNA exosome complex, mediated by EXOSC3. Interacts with ARHGAP18. Interacts with exosome cofactors EXOSC10 and MTREX. Post-translationally, phosphorylated in M (mitotic) phase.

The protein localises to the nucleus. The protein resides in the nucleolus. It localises to the cytoplasm. In terms of biological role, RNA-binding protein that associates with the RNA exosome complex. Involved in the 3'-processing of the 7S pre-RNA to the mature 5.8S rRNA and play a role in recruiting the RNA exosome complex to pre-rRNA; this function may include C1D. The chain is M-phase phosphoprotein 6 from Homo sapiens (Human).